The chain runs to 156 residues: Probable succinate transporter subunit YjjB (156 aa).

Helical transmembrane passes span 7 to 27, 54 to 74, 86 to 106, and 128 to 148; these read WALL…AMVF, FGMD…MIGI, VFTV…TAMI, and FLKA…PGLW.

This sequence belongs to the ThrE exporter (TC 2.A.79) family. The transporter is composed of YjjB and YjjP.

The protein localises to the cell inner membrane. Functionally, involved in succinate export with YjjP. Both proteins are required for export. The chain is Probable succinate transporter subunit YjjB from Yersinia enterocolitica serotype O:8 / biotype 1B (strain NCTC 13174 / 8081).